A 179-amino-acid polypeptide reads, in one-letter code: MPKPSRGPRMCSGPDHERLVLANMSASLFLNKKLRTTEARAKRLRPFAEKLVTLSKRGGLHSRRRALSILRNKAALHELFTNIAPLVEDRNGGYTRITKVGFRSGDGAPMALIELILEPVSARTRGTDTLPDTVIDTGPDSAPDPVPGSEPGSAAGDLPDADTAPADPGESSSNQRVIR.

The tract at residues 127–179 (TDTLPDTVIDTGPDSAPDPVPGSEPGSAAGDLPDADTAPADPGESSSNQRVIR) is disordered. Residues 154–168 (AAGDLPDADTAPADP) show a composition bias toward low complexity. The span at 170–179 (ESSSNQRVIR) shows a compositional bias: polar residues.

Belongs to the bacterial ribosomal protein bL17 family. In terms of assembly, part of the 50S ribosomal subunit. Contacts protein L32.

The polypeptide is Large ribosomal subunit protein bL17 (Tropheryma whipplei (strain TW08/27) (Whipple's bacillus)).